The sequence spans 91 residues: Large ribosomal subunit protein eL37 (91 aa).

The Zn(2+) site is built by C19, C22, C34, and C37. A C4-type zinc finger spans residues 19–37 (CKRCGKSSFHIQKKRCASC).

The protein belongs to the eukaryotic ribosomal protein eL37 family. It depends on Zn(2+) as a cofactor.

In terms of biological role, binds to the 23S rRNA. This chain is Large ribosomal subunit protein eL37, found in Caenorhabditis elegans.